Consider the following 40-residue polypeptide: Photosystem II reaction center protein J (40 aa).

Residues 8-28 (IPLWIIGTVAGILVIGLVGIF) form a helical membrane-spanning segment.

It belongs to the PsbJ family. As to quaternary structure, PSII is composed of 1 copy each of membrane proteins PsbA, PsbB, PsbC, PsbD, PsbE, PsbF, PsbH, PsbI, PsbJ, PsbK, PsbL, PsbM, PsbT, PsbX, PsbY, PsbZ, Psb30/Ycf12, at least 3 peripheral proteins of the oxygen-evolving complex and a large number of cofactors. It forms dimeric complexes.

Its subcellular location is the plastid. It is found in the chloroplast thylakoid membrane. In terms of biological role, one of the components of the core complex of photosystem II (PSII). PSII is a light-driven water:plastoquinone oxidoreductase that uses light energy to abstract electrons from H(2)O, generating O(2) and a proton gradient subsequently used for ATP formation. It consists of a core antenna complex that captures photons, and an electron transfer chain that converts photonic excitation into a charge separation. The sequence is that of Photosystem II reaction center protein J from Spinacia oleracea (Spinach).